The sequence spans 165 residues: 6,7-dimethyl-8-ribityllumazine synthase (165 aa).

5-amino-6-(D-ribitylamino)uracil contacts are provided by residues tryptophan 26, serine 57–glutamate 59, and valine 79–valine 81. Alanine 84–threonine 85 serves as a coordination point for (2S)-2-hydroxy-3-oxobutyl phosphate. The Proton donor role is filled by histidine 87. Position 112 (histidine 112) interacts with 5-amino-6-(D-ribitylamino)uracil. Arginine 126 contacts (2S)-2-hydroxy-3-oxobutyl phosphate.

It belongs to the DMRL synthase family.

It catalyses the reaction (2S)-2-hydroxy-3-oxobutyl phosphate + 5-amino-6-(D-ribitylamino)uracil = 6,7-dimethyl-8-(1-D-ribityl)lumazine + phosphate + 2 H2O + H(+). The protein operates within cofactor biosynthesis; riboflavin biosynthesis; riboflavin from 2-hydroxy-3-oxobutyl phosphate and 5-amino-6-(D-ribitylamino)uracil: step 1/2. Catalyzes the formation of 6,7-dimethyl-8-ribityllumazine by condensation of 5-amino-6-(D-ribitylamino)uracil with 3,4-dihydroxy-2-butanone 4-phosphate. This is the penultimate step in the biosynthesis of riboflavin. The chain is 6,7-dimethyl-8-ribityllumazine synthase from Salinispora arenicola (strain CNS-205).